The sequence spans 121 residues: Large ribosomal subunit protein uL22 (121 aa).

This sequence belongs to the universal ribosomal protein uL22 family. In terms of assembly, part of the 50S ribosomal subunit.

In terms of biological role, this protein binds specifically to 23S rRNA; its binding is stimulated by other ribosomal proteins, e.g. L4, L17, and L20. It is important during the early stages of 50S assembly. It makes multiple contacts with different domains of the 23S rRNA in the assembled 50S subunit and ribosome. The globular domain of the protein is located near the polypeptide exit tunnel on the outside of the subunit, while an extended beta-hairpin is found that lines the wall of the exit tunnel in the center of the 70S ribosome. The polypeptide is Large ribosomal subunit protein uL22 (Synechococcus sp. (strain CC9311)).